The chain runs to 337 residues: Phosphate acyltransferase (337 aa).

This sequence belongs to the PlsX family. Homodimer. Probably interacts with PlsY.

The protein localises to the cytoplasm. It catalyses the reaction a fatty acyl-[ACP] + phosphate = an acyl phosphate + holo-[ACP]. The protein operates within lipid metabolism; phospholipid metabolism. In terms of biological role, catalyzes the reversible formation of acyl-phosphate (acyl-PO(4)) from acyl-[acyl-carrier-protein] (acyl-ACP). This enzyme utilizes acyl-ACP as fatty acyl donor, but not acyl-CoA. This is Phosphate acyltransferase from Polynucleobacter asymbioticus (strain DSM 18221 / CIP 109841 / QLW-P1DMWA-1) (Polynucleobacter necessarius subsp. asymbioticus).